Here is a 267-residue protein sequence, read N- to C-terminus: Small ribosomal subunit protein uS2 (267 aa).

Residues 233 to 250 are compositionally biased toward basic and acidic residues; sequence RAESDKAETDKVEVEGKG. The disordered stretch occupies residues 233–267; it reads RAESDKAETDKVEVEGKGEAPAAEAAEVVESADKA. Residues 251 to 261 are compositionally biased toward low complexity; the sequence is EAPAAEAAEVV.

It belongs to the universal ribosomal protein uS2 family.

The protein is Small ribosomal subunit protein uS2 of Syntrophotalea carbinolica (strain DSM 2380 / NBRC 103641 / GraBd1) (Pelobacter carbinolicus).